The sequence spans 739 residues: G2 and S phase-expressed protein 1 (739 aa).

The segment covering Met1 to Ser11 has biased composition (basic and acidic residues). A disordered region spans residues Met1–Met20. Ser91 is modified (phosphoserine). Disordered stretches follow at residues Ser116–Arg136, Glu149–Val306, and Pro320–Ala639. Over residues Glu149–Thr165 the composition is skewed to basic and acidic residues. Ser157 is modified (phosphoserine). Phosphothreonine is present on Thr159. A phosphoserine mark is found at Ser171, Ser187, Ser208, Ser247, and Ser262. Positions Pro181–Ala195 are enriched in low complexity. Residues Ile268–Pro280 are compositionally biased toward basic and acidic residues. 2 stretches are compositionally biased toward low complexity: residues Ala284–Gly294 and Ser330–Ala342. Ser331 carries the post-translational modification Phosphoserine. Positions Pro360–Lys372 are enriched in polar residues. A compositionally biased stretch (low complexity) spans Thr411–Pro424. Composition is skewed to polar residues over residues Trp430–Thr446 and Cys455–Phe470. Ser480 is modified (phosphoserine). A compositionally biased stretch (polar residues) spans Pro481–Leu522. Thr485 is subject to Phosphothreonine. Phosphoserine is present on residues Ser496, Ser499, Ser514, Ser520, Ser523, and Ser528. Thr532 is subject to Phosphothreonine. Phosphoserine is present on residues Ser535 and Ser555. Positions Glu577–Leu590 are enriched in basic and acidic residues. A phosphoserine mark is found at Ser594 and Ser611. The residue at position 696 (Thr696) is a Phosphothreonine. Phosphoserine occurs at positions 707, 717, 718, 724, and 734.

Phosphorylated in mitosis.

It localises to the cytoplasm. It is found in the cytoskeleton. Its function is as follows. May be involved in p53-induced cell cycle arrest in G2/M phase by interfering with microtubule rearrangements that are required to enter mitosis. Overexpression delays G2/M phase progression. The sequence is that of G2 and S phase-expressed protein 1 from Homo sapiens (Human).